Reading from the N-terminus, the 1186-residue chain is Partner and localizer of BRCA2 (1186 aa).

Residues 1-160 (MDEPPGKPLS…QKRTFISQER (160 aa)) form a required for its oligomerization and is important for its focal concentration at DNA damage sites region. The interaction with RAD51 stretch occupies residues 1–200 (MDEPPGKPLS…PVTEIRTHLL (200 aa)). Residues 1–319 (MDEPPGKPLS…SKSGQLPTSS (319 aa)) form an interaction with BRCA1 region. The interval 1–579 (MDEPPGKPLS…EDSLSWSNSA (579 aa)) is DNA-binding (with the preference D loop &gt; dsDNA &gt; ssDNA). Residues 9-41 (LSCEEKEKLKEKLAFLKREYSKTLARLQRAQRA) adopt a coiled-coil conformation. Disordered stretches follow at residues 52 to 72 (VEEQ…HSEP) and 95 to 157 (KTSI…TFIS). Basic and acidic residues predominate over residues 120 to 141 (RTDDTQEHFPHRVSDPSGEQKQ). Positions 143 to 152 (LPSRRKKQQK) are enriched in basic residues. Phosphoserine is present on residues S172 and S190. The segment at 252-273 (TLSDSGSSQHLEHIPPKGSSEL) is disordered. Position 285 is a phosphoserine (S285). A disordered region spans residues 346–365 (KEQNQTEKSLKSPSDTLDGR). Residues S376 and S387 each carry the phosphoserine modification. Residues 395 to 446 (SCTVPEGLLFPAEYYVRTTRSMSNCQRKVAVEAVIQSHLDVKKKGFKNKNKD) form a chAM (Chromatin-association motif); required for chromatin association, mediates nucleosome association region. The interval 440-525 (FKNKNKDASK…RKSACTPASD (86 aa)) is disordered. S454 bears the Phosphoserine mark. The span at 467 to 488 (GTCTGQPSSRTSQKLLSLTKVS) shows a compositional bias: polar residues. S660 carries the post-translational modification Phosphoserine. Disordered regions lie at residues 679-698 (PGKS…KTGL) and 774-798 (KQFD…QGQP). Positions 687–698 (PNSQSQHTKTGL) are enriched in polar residues. The interval 775 to 1186 (QFDSSGSPAK…DGNIFVYHYS (412 aa)) is required for interaction with POLH and POLH DNA synthesis stimulation. Phosphoserine is present on S781. The interaction with RAD51, BRCA2 and POLH stretch occupies residues 853–1186 (GNLQLVSELK…DGNIFVYHYS (334 aa)). WD repeat units follow at residues 854-915 (NLQL…WHFA), 917-961 (VPVL…QVLL), 962-1009 (KSGN…LMPP), 1010-1052 (EETI…MHID), 1058-1109 (SVCH…MLYC), 1115-1153 (AGRF…LLPP), and 1155-1186 (SDQH…YHYS).

Homooligomer; dissociated upon DNA damage thus allowing association with BRCA1. Oligomerization is essential for its focal accumulation at DNA breaks. Part of a BRCA complex containing BRCA1, BRCA2 and PALB2. Interacts with BRCA1 and this interaction is essential for its function in HRR. Interacts with RAD51AP1 and MORF4L1/MRG15. Component of the homologous recombination repair (HR) complex composed of ERCC5/XPG, BRCA2, PALB2, DSS1 and RAD51. Within the complex, interacts with ERCC5/XPG and BRCA2. Interacts with BRCA2, RAD51C, RAD51 and XRCC3; the interactions are direct and it may serve as a scaffold for a HR complex containing PALB2, BRCA2, RAD51C, RAD51 and XRCC3. Interacts with POLH; the interaction is direct.

It is found in the nucleus. Functionally, plays a critical role in homologous recombination repair (HRR) through its ability to recruit BRCA2 and RAD51 to DNA breaks. Strongly stimulates the DNA strand-invasion activity of RAD51, stabilizes the nucleoprotein filament against a disruptive BRC3-BRC4 polypeptide and helps RAD51 to overcome the suppressive effect of replication protein A (RPA). Functionally cooperates with RAD51AP1 in promoting of D-loop formation by RAD51. Serves as the molecular scaffold in the formation of the BRCA1-PALB2-BRCA2 complex which is essential for homologous recombination. Via its WD repeats is proposed to scaffold a HR complex containing RAD51C and BRCA2 which is thought to play a role in HR-mediated DNA repair. Essential partner of BRCA2 that promotes the localization and stability of BRCA2. Also enables its recombinational repair and checkpoint functions of BRCA2. May act by promoting stable association of BRCA2 with nuclear structures, allowing BRCA2 to escape the effects of proteasome-mediated degradation. Binds DNA with high affinity for D loop, which comprises single-stranded, double-stranded and branched DNA structures. May play a role in the extension step after strand invasion at replication-dependent DNA double-strand breaks; together with BRCA2 is involved in both POLH localization at collapsed replication forks and DNA polymerization activity. This is Partner and localizer of BRCA2 (PALB2) from Homo sapiens (Human).